The primary structure comprises 374 residues: Heme A synthase (374 aa).

The next 8 helical transmembrane spans lie at Val22 to Ile42, Leu107 to Gly127, Pro135 to Val155, Leu172 to Leu192, Ala209 to Ile229, Ala265 to Leu285, Ala306 to Ile326, and Pro327 to Leu347. His271 contacts heme. His332 lines the heme pocket.

The protein belongs to the COX15/CtaA family. Type 2 subfamily. In terms of assembly, interacts with CtaB. Heme b is required as a cofactor.

It localises to the cell membrane. It catalyses the reaction Fe(II)-heme o + 2 A + H2O = Fe(II)-heme a + 2 AH2. It participates in porphyrin-containing compound metabolism; heme A biosynthesis; heme A from heme O: step 1/1. Its function is as follows. Catalyzes the conversion of heme O to heme A by two successive hydroxylations of the methyl group at C8. The first hydroxylation forms heme I, the second hydroxylation results in an unstable dihydroxymethyl group, which spontaneously dehydrates, resulting in the formyl group of heme A. The protein is Heme A synthase of Rhodospirillum centenum (strain ATCC 51521 / SW).